Consider the following 430-residue polypeptide: Serine/threonine transporter SstT (430 aa).

The next 9 membrane-spanning stretches (helical) occupy residues 24–44 (IIVGLIIGTVLALTMPHVTWI), 47–67 (FGTLFVAALKAAAPILVFVLV), 82–102 (FGTVLFLYLFTTFLAAVVAVL), 144–164 (AIIDGNYICILMWACLFGLAM), 186–206 (VIRWVINLAPFGIMGLVFTNV), 223–243 (LLVGTMLLMVLVFGPLVIFIF), 294–314 (IPLGATINMNGAAITITIMAM), 320–340 (LGIQISLPAAILLSVVSALGA), and 361–381 (FGISNDIAMQVVGVGFIIGVI).

This sequence belongs to the dicarboxylate/amino acid:cation symporter (DAACS) (TC 2.A.23) family.

The protein resides in the cell membrane. It carries out the reaction L-serine(in) + Na(+)(in) = L-serine(out) + Na(+)(out). The catalysed reaction is L-threonine(in) + Na(+)(in) = L-threonine(out) + Na(+)(out). Involved in the import of serine and threonine into the cell, with the concomitant import of sodium (symport system). The sequence is that of Serine/threonine transporter SstT from Bifidobacterium adolescentis (strain ATCC 15703 / DSM 20083 / NCTC 11814 / E194a).